We begin with the raw amino-acid sequence, 433 residues long: 3-phosphoshikimate 1-carboxyvinyltransferase (433 aa).

3-phosphoshikimate contacts are provided by lysine 21, serine 22, and arginine 26. Lysine 21 contacts phosphoenolpyruvate. Phosphoenolpyruvate contacts are provided by glycine 92 and arginine 120. Serine 166, glutamine 168, aspartate 317, and lysine 344 together coordinate 3-phosphoshikimate. Glutamine 168 lines the phosphoenolpyruvate pocket. The active-site Proton acceptor is aspartate 317. Arginine 348 and arginine 391 together coordinate phosphoenolpyruvate.

Belongs to the EPSP synthase family. As to quaternary structure, monomer.

It localises to the cytoplasm. The catalysed reaction is 3-phosphoshikimate + phosphoenolpyruvate = 5-O-(1-carboxyvinyl)-3-phosphoshikimate + phosphate. The protein operates within metabolic intermediate biosynthesis; chorismate biosynthesis; chorismate from D-erythrose 4-phosphate and phosphoenolpyruvate: step 6/7. Its function is as follows. Catalyzes the transfer of the enolpyruvyl moiety of phosphoenolpyruvate (PEP) to the 5-hydroxyl of shikimate-3-phosphate (S3P) to produce enolpyruvyl shikimate-3-phosphate and inorganic phosphate. The sequence is that of 3-phosphoshikimate 1-carboxyvinyltransferase from Caldicellulosiruptor saccharolyticus (strain ATCC 43494 / DSM 8903 / Tp8T 6331).